A 307-amino-acid chain; its full sequence is Small ribosomal subunit biogenesis GTPase RsgA (307 aa).

The disordered stretch occupies residues 1–21 (MPSEHPFSDGISTPNPKETMN). Residues 10–21 (GISTPNPKETMN) are compositionally biased toward polar residues. Residues 85–242 (RQDAWKTKLI…LIDSPGLQEF (158 aa)) enclose the CP-type G domain. GTP contacts are provided by residues 135 to 138 (NKAD) and 184 to 192 (GQSGMGKST). Residues Cys266, Cys271, His273, and Cys279 each contribute to the Zn(2+) site.

This sequence belongs to the TRAFAC class YlqF/YawG GTPase family. RsgA subfamily. Monomer. Associates with 30S ribosomal subunit, binds 16S rRNA. Zn(2+) is required as a cofactor.

Its subcellular location is the cytoplasm. Functionally, one of several proteins that assist in the late maturation steps of the functional core of the 30S ribosomal subunit. Helps release RbfA from mature subunits. May play a role in the assembly of ribosomal proteins into the subunit. Circularly permuted GTPase that catalyzes slow GTP hydrolysis, GTPase activity is stimulated by the 30S ribosomal subunit. This is Small ribosomal subunit biogenesis GTPase RsgA from Neisseria gonorrhoeae (strain NCCP11945).